Consider the following 175-residue polypeptide: Nucleoside-triphosphatase THEP1 (175 aa).

ATP-binding positions include 15 to 22 and 106 to 113; these read GNPGVGKT and VLAIDEIG.

The protein belongs to the THEP1 NTPase family.

It carries out the reaction a ribonucleoside 5'-triphosphate + H2O = a ribonucleoside 5'-diphosphate + phosphate + H(+). Its function is as follows. Has nucleotide phosphatase activity towards ATP, GTP, CTP, TTP and UTP. May hydrolyze nucleoside diphosphates with lower efficiency. The sequence is that of Nucleoside-triphosphatase THEP1 from Saccharolobus solfataricus (strain ATCC 35092 / DSM 1617 / JCM 11322 / P2) (Sulfolobus solfataricus).